Here is a 203-residue protein sequence, read N- to C-terminus: uncharacterized protein (203 aa).

A disordered region spans residues 117 to 138; the sequence is SSDPKLKQPSNCLNDQTNNDSA. Over residues 124 to 138 the composition is skewed to polar residues; the sequence is QPSNCLNDQTNNDSA.

It localises to the cytoplasm. It is found in the nucleus. This is an uncharacterized protein from Schizosaccharomyces pombe (strain 972 / ATCC 24843) (Fission yeast).